Consider the following 227-residue polypeptide: Pyridoxine/pyridoxamine 5'-phosphate oxidase (227 aa).

Substrate-binding positions include 23–26 (RREY) and Lys81. FMN contacts are provided by residues 76–81 (RIVLLK), 91–92 (YT), Arg97, Lys98, and Gln120. The substrate site is built by Tyr138, Arg142, and Ser146. FMN is bound by residues 155–156 (QS) and Trp200. Residue 206–208 (RLH) participates in substrate binding. Arg210 is a binding site for FMN.

The protein belongs to the pyridoxamine 5'-phosphate oxidase family. Homodimer. The cofactor is FMN.

It catalyses the reaction pyridoxamine 5'-phosphate + O2 + H2O = pyridoxal 5'-phosphate + H2O2 + NH4(+). It carries out the reaction pyridoxine 5'-phosphate + O2 = pyridoxal 5'-phosphate + H2O2. It functions in the pathway cofactor metabolism; pyridoxal 5'-phosphate salvage; pyridoxal 5'-phosphate from pyridoxamine 5'-phosphate: step 1/1. It participates in cofactor metabolism; pyridoxal 5'-phosphate salvage; pyridoxal 5'-phosphate from pyridoxine 5'-phosphate: step 1/1. Functionally, catalyzes the oxidation of either pyridoxine 5'-phosphate (PNP) or pyridoxamine 5'-phosphate (PMP) into pyridoxal 5'-phosphate (PLP). The protein is Pyridoxine/pyridoxamine 5'-phosphate oxidase of Pectobacterium atrosepticum (strain SCRI 1043 / ATCC BAA-672) (Erwinia carotovora subsp. atroseptica).